Reading from the N-terminus, the 312-residue chain is Dehydrogenase/reductase SDR family member 7C (312 aa).

An N-terminal signal peptide occupies residues 1-18; sequence MGVMAMLMLPLLLLGISG. Residues S47, L49, Y192, K196, and S227 each coordinate NAD(+). Y192 acts as the Proton acceptor in catalysis.

It belongs to the short-chain dehydrogenases/reductases (SDR) family.

The protein localises to the sarcoplasmic reticulum membrane. The enzyme catalyses all-trans-retinol + NAD(+) = all-trans-retinal + NADH + H(+). Functionally, NADH-dependent oxidoreductase which catalyzes the oxidation of all-trans-retinol to all-trans-retinal. Plays a role in the regulation of cardiac and skeletal muscle metabolic functions. Maintains Ca(2+) intracellular homeostasis by repressing Ca(2+) release from the sarcoplasmic reticulum (SR) in myotubes, possibly through local alternations in NAD/NADH or retinol/retinal. Also plays a role in Ca(2+) homeostasis by controlling Ca(2+) overload in the cytosol and the SR in myotubes. Involved in glucose uptake into skeletal muscles and muscle performance by activating PI3K and mTORC2-mediated AKT1 phosphorylation signaling pathways, possibly through the action of its downstream catalytic product all-trans-retinoic acid. In Homo sapiens (Human), this protein is Dehydrogenase/reductase SDR family member 7C.